We begin with the raw amino-acid sequence, 211 residues long: Ribosomal RNA small subunit methyltransferase G (211 aa).

S-adenosyl-L-methionine is bound by residues Gly-73, 126–127, and Arg-142; that span reads IE.

Belongs to the methyltransferase superfamily. RNA methyltransferase RsmG family.

It is found in the cytoplasm. It carries out the reaction guanosine(527) in 16S rRNA + S-adenosyl-L-methionine = N(7)-methylguanosine(527) in 16S rRNA + S-adenosyl-L-homocysteine. In terms of biological role, specifically methylates the N7 position of guanine in position 527 of 16S rRNA. The chain is Ribosomal RNA small subunit methyltransferase G from Methylorubrum extorquens (strain PA1) (Methylobacterium extorquens).